The sequence spans 263 residues: UPF0739 protein C1orf74 homolog (263 aa).

Belongs to the UPF0739 family.

This Rattus norvegicus (Rat) protein is UPF0739 protein C1orf74 homolog.